A 219-amino-acid chain; its full sequence is UPF0502 protein Gmet_0262 (219 aa).

It belongs to the UPF0502 family.

This Geobacter metallireducens (strain ATCC 53774 / DSM 7210 / GS-15) protein is UPF0502 protein Gmet_0262.